The sequence spans 860 residues: MQELYRPEEIESTVQQHWHENDTFKVTEDPCKEKYYCLSMLPYPSGRLHMGHVRNYTIGDVIARYQRMLGKNVLQPIGWDAFGLPAEGAAVKNNTAPAPWTYANIDYMKNQLKLLGFGYDWSREVTTCRPDYYRWEQWFFTRLYEKGLVYKKTSAVNWCPQDQTVLANEQVIDGCCWRCDTKVERKEIPQWFVKITAYADQLLYDLDKLESWPEQVKTMQRNWIGRSEGVEITFQVADSEETLTVYTTRPDTFMGTTYVAVAAGHPLSLQAAASNPALADFIQECRTTKVAEADMATMEKKGMATGLHAVHPLTGEMLPVWVANFVLMDYGTGAVMAVPGHDQRDFEFARKYDLPVKPVIRNADGSEPDLSAQAMTEKGVLFNSGEFDGLDFQAGFNAIADALVAQGVGERKVNYRLRDWGVSRQRYWGAPIPMMTLEDGTVVPTPEDQLPVVLPEDVVMDGISSPLKADPDWAKTTYNGQPALRETDTFDTFMESSWYYARYTCPDYDRGMLDPAAANYWLPVDQYIGGIEHAIMHLMYFRFYHKLLRDAGLVTSDEPAKRLLCQGMVLADAFYYLTSSGERVWVSPLEVSVERDEKGRIVKSTDASGRELVYAGMSKMSKSKNNGIDPQEMVEKYGADTVRLFMMFASPAEMTLEWQESGVEGANRFLKRVWKLAYEHPQQGPVGALDIDALNDEQKALRREVHKTIAKVTDDIGRRQTFNTAIAAIMELMNKLARAPQQTGQDRALLQEALVAVVRMLYPFTPHACFTLWRALGGEGDIDNAPWPVADEAAMVEDAKLVVIQVNGKLRGRITVPADADEALVCERASQEHLVAKHLEGTTVRKVIYVPGKLLNLVVG.

Residues 42 to 52 (PYPSGRLHMGH) carry the 'HIGH' region motif. Positions 619–623 (KMSKS) match the 'KMSKS' region motif. Residue Lys622 coordinates ATP.

It belongs to the class-I aminoacyl-tRNA synthetase family.

The protein resides in the cytoplasm. It catalyses the reaction tRNA(Leu) + L-leucine + ATP = L-leucyl-tRNA(Leu) + AMP + diphosphate. The chain is Leucine--tRNA ligase from Sodalis glossinidius (strain morsitans).